We begin with the raw amino-acid sequence, 938 residues long: E3 ubiquitin-protein ligase CBL-B (938 aa).

The tract at residues 35-167 (PPKQAAADRR…KAIFPNGQFQ (133 aa)) is 4H. The Cbl-PTB domain occupies 35 to 343 (PPKQAAADRR…GRSYNPDLTG (309 aa)). An EF-hand-like region spans residues 168–240 (GDNFRITKAD…FEFDIFTRLF (73 aa)). Ca(2+) is bound by residues D221, T223, N225, Y227, and E232. The SH2-like stretch occupies residues 241-343 (QPWGSILRNW…GRSYNPDLTG (103 aa)). S282 is modified (phosphoserine; by PKC/PRKCQ). R286 is a 4-O-phospho-L-tyrosine binding site. Residues 344–372 (LCEPTPHDHIKVTQEQYELYCEMGSTFQL) are linker. Y363 carries the post-translational modification Phosphotyrosine. An RING-type zinc finger spans residues 373–412 (CKICAENDKDVKIEPCGHLMCTSCLTAWQESDGQGCPFCR). Residues 465 to 588 (ASVRKCTDRQ…SVPSRDQPMP (124 aa)) form a disordered region. Residues 473–486 (RQNSPVTSPGSSPL) show a composition bias toward polar residues. Residues S476, S480, S484, S521, S525, and S529 each carry the phosphoserine modification. The segment at 543–567 (PLPAPPPPLRDPPPPPERPPPIPPD) is interaction with VAV1. Positions 544-566 (LPAPPPPLRDPPPPPERPPPIPP) are enriched in pro residues. S633 carries the phosphoserine modification. Phosphotyrosine occurs at positions 664 and 708. 2 disordered regions span residues 702–725 (EEDD…PSHC) and 771–885 (DALP…EAAL). Residues 714 to 724 (HPVSLNSQPSH) show a composition bias toward polar residues. Positions 775-784 (PSLPPPPPPA) are enriched in pro residues. The span at 794 to 804 (PPGSSSRPSSG) shows a compositional bias: low complexity. Residues 839 to 855 (NRASQDYDQLPSSSDGS) are compositionally biased toward polar residues. The residue at position 845 (Y845) is a Phosphotyrosine. An interaction with SH3KBP1 region spans residues 847-883 (QLPSSSDGSQAPARPPKPRPRRTAPEIHHRKPHGPEA). The segment covering 862 to 878 (PKPRPRRTAPEIHHRKP) has biased composition (basic residues). One can recognise a UBA domain in the interval 887 to 926 (NVDAKIAKLMGEGYAFEEVKRALEIAQNNLEVARSILREF).

Interacts with SH3 domain-containing proteins LCK, CRK and SORBS1. Interacts with LCP2 and ZAP70. Interacts with CBL. Interacts with SH3 domain-containing proteins VAV1, FYN, FGR, PLCG1, GRB2, CRKL, PIK3R1 and SH3KBP1/CIN85. Identified in heterotrimeric complexes with SH3KBP1/CIN85, CD2AP and ARHGEF7, where one CBLB peptide binds two copies of the other protein. Interacts with poly-ubiquitinated proteins. Dimerization is required for the binding of poly-ubiquitin, but not for the binding of mono-ubiquitin. Interacts with EGFR (phosphorylated). Interacts with IFT20. In terms of processing, phosphorylated on tyrosine and serine residues upon TCR or BCR activation, and upon various types of cell stimulation. Post-translationally, auto-ubiquitinated upon EGF-mediated cell activation or upon T-cell costimulation by CD28; which promotes proteasomal degradation.

The protein resides in the cytoplasm. It catalyses the reaction S-ubiquitinyl-[E2 ubiquitin-conjugating enzyme]-L-cysteine + [acceptor protein]-L-lysine = [E2 ubiquitin-conjugating enzyme]-L-cysteine + N(6)-ubiquitinyl-[acceptor protein]-L-lysine.. Its pathway is protein modification; protein ubiquitination. E3 ubiquitin-protein ligase which accepts ubiquitin from specific E2 ubiquitin-conjugating enzymes, and transfers it to substrates, generally promoting their degradation by the proteasome. Negatively regulates TCR (T-cell receptor), BCR (B-cell receptor) and FCER1 (high affinity immunoglobulin epsilon receptor) signal transduction pathways. In naive T-cells, inhibits VAV1 activation upon TCR engagement and imposes a requirement for CD28 costimulation for proliferation and IL-2 production. Also acts by promoting PIK3R1/p85 ubiquitination, which impairs its recruitment to the TCR and subsequent activation. In activated T-cells, inhibits PLCG1 activation and calcium mobilization upon restimulation and promotes anergy. In B-cells, acts by ubiquitinating SYK and promoting its proteasomal degradation. Slightly promotes SRC ubiquitination. May be involved in EGFR ubiquitination and internalization. May be functionally coupled with the E2 ubiquitin-protein ligase UB2D3. In association with CBL, required for proper feedback inhibition of ciliary platelet-derived growth factor receptor-alpha (PDGFRA) signaling pathway via ubiquitination and internalization of PDGFRA. The chain is E3 ubiquitin-protein ligase CBL-B (Cblb) from Rattus norvegicus (Rat).